The chain runs to 58 residues: Ribulose bisphosphate carboxylase large chain (58 aa).

The propeptide occupies 1 to 2 (MS). P3 carries the post-translational modification N-acetylproline. K14 carries the post-translational modification N6,N6,N6-trimethyllysine.

The protein belongs to the RuBisCO large chain family. Type I subfamily. In terms of assembly, heterohexadecamer of 8 large chains and 8 small chains.

It localises to the plastid. The protein resides in the chloroplast. It carries out the reaction 2 (2R)-3-phosphoglycerate + 2 H(+) = D-ribulose 1,5-bisphosphate + CO2 + H2O. It catalyses the reaction D-ribulose 1,5-bisphosphate + O2 = 2-phosphoglycolate + (2R)-3-phosphoglycerate + 2 H(+). Functionally, ruBisCO catalyzes two reactions: the carboxylation of D-ribulose 1,5-bisphosphate, the primary event in carbon dioxide fixation, as well as the oxidative fragmentation of the pentose substrate in the photorespiration process. Both reactions occur simultaneously and in competition at the same active site. In Euonymus maackii (Maack's spindle tree), this protein is Ribulose bisphosphate carboxylase large chain (rbcL).